The sequence spans 217 residues: Small ribosomal subunit protein uS3 (217 aa).

The KH type-2 domain occupies 38–106 (IRKFIQKELA…QVHINIIEIK (69 aa)).

Belongs to the universal ribosomal protein uS3 family. In terms of assembly, part of the 30S ribosomal subunit. Forms a tight complex with proteins S10 and S14.

Its function is as follows. Binds the lower part of the 30S subunit head. Binds mRNA in the 70S ribosome, positioning it for translation. The sequence is that of Small ribosomal subunit protein uS3 from Streptococcus uberis (strain ATCC BAA-854 / 0140J).